The following is a 137-amino-acid chain: Protein ApaG (137 aa).

One can recognise an ApaG domain in the interval 2–126 (PKYQFQVQVQ…FVLEAFSPGQ (125 aa)).

This chain is Protein ApaG, found in Acidovorax sp. (strain JS42).